The following is a 141-amino-acid chain: ATP synthase epsilon chain (141 aa).

This sequence belongs to the ATPase epsilon chain family. In terms of assembly, F-type ATPases have 2 components, CF(1) - the catalytic core - and CF(0) - the membrane proton channel. CF(1) has five subunits: alpha(3), beta(3), gamma(1), delta(1), epsilon(1). CF(0) has three main subunits: a, b and c.

The protein resides in the cell inner membrane. Its function is as follows. Produces ATP from ADP in the presence of a proton gradient across the membrane. The protein is ATP synthase epsilon chain of Chromohalobacter salexigens (strain ATCC BAA-138 / DSM 3043 / CIP 106854 / NCIMB 13768 / 1H11).